The sequence spans 347 residues: NADH-ubiquinone oxidoreductase chain 2 (347 aa).

The next 11 membrane-spanning stretches (helical) occupy residues 3–23 (PPIFIIIMSTVISGTVIVMTS), 25–45 (HWMLTWIGFEMNMLAIIPILM), 59–79 (YFLTQATASMLLMMGIIINLL), 96–116 (ILMTTALAMKLGLAPFHFWVP), 122–142 (ISLSSGMILLTWQKIAPLSIL), 149–169 (INPHLLLPMAILSVLIGGWGG), 178–198 (IMAYSSIAHMGWMAAILLYNP), 201–221 (MFLNLIIYITMTLTTFMLFML), 237–257 (APLITSLILTLMLSLGGLPPL), 274–294 (EMIILPTFLAITALLNLYFYM), and 323–343 (TIFLPPLIIISTMMLPLTPMI).

This sequence belongs to the complex I subunit 2 family. As to quaternary structure, core subunit of respiratory chain NADH dehydrogenase (Complex I) which is composed of 45 different subunits. Interacts with TMEM242.

The protein localises to the mitochondrion inner membrane. The catalysed reaction is a ubiquinone + NADH + 5 H(+)(in) = a ubiquinol + NAD(+) + 4 H(+)(out). Core subunit of the mitochondrial membrane respiratory chain NADH dehydrogenase (Complex I) which catalyzes electron transfer from NADH through the respiratory chain, using ubiquinone as an electron acceptor. Essential for the catalytic activity and assembly of complex I. In Viverra tangalunga (Malayan civet), this protein is NADH-ubiquinone oxidoreductase chain 2.